The sequence spans 358 residues: 3-isopropylmalate dehydrogenase (358 aa).

76-89 (GPRWDNLTGAERPE) is an NAD(+) binding site. Substrate-binding residues include Arg-96, Arg-106, Arg-135, and Asp-225. Positions 225, 249, and 253 each coordinate Mg(2+). An NAD(+)-binding site is contributed by 283–295 (GSAPDIAGQNKAN).

This sequence belongs to the isocitrate and isopropylmalate dehydrogenases family. LeuB type 1 subfamily. Homodimer. Requires Mg(2+) as cofactor. Mn(2+) is required as a cofactor.

It localises to the cytoplasm. It catalyses the reaction (2R,3S)-3-isopropylmalate + NAD(+) = 4-methyl-2-oxopentanoate + CO2 + NADH. It functions in the pathway amino-acid biosynthesis; L-leucine biosynthesis; L-leucine from 3-methyl-2-oxobutanoate: step 3/4. In terms of biological role, catalyzes the oxidation of 3-carboxy-2-hydroxy-4-methylpentanoate (3-isopropylmalate) to 3-carboxy-4-methyl-2-oxopentanoate. The product decarboxylates to 4-methyl-2 oxopentanoate. The chain is 3-isopropylmalate dehydrogenase from Oleidesulfovibrio alaskensis (strain ATCC BAA-1058 / DSM 17464 / G20) (Desulfovibrio alaskensis).